Here is a 150-residue protein sequence, read N- to C-terminus: Small ribosomal subunit protein uS15 (150 aa).

Residues 1-22 (MNKRREKGQSHSTRPPHPQPPQ) are disordered.

This sequence belongs to the universal ribosomal protein uS15 family. In terms of assembly, part of the 30S ribosomal subunit.

This is Small ribosomal subunit protein uS15 from Aeropyrum pernix (strain ATCC 700893 / DSM 11879 / JCM 9820 / NBRC 100138 / K1).